The chain runs to 730 residues: Elongation factor 2 (730 aa).

The 210-residue stretch at 19–228 (TKIRNIGIVA…TGVSFKDVYD (210 aa)) folds into the tr-type G domain. GTP contacts are provided by residues 28 to 35 (AHIDHGKT), 94 to 98 (DTPGH), and 148 to 151 (NKVD). Histidine 596 bears the Diphthamide mark.

Belongs to the TRAFAC class translation factor GTPase superfamily. Classic translation factor GTPase family. EF-G/EF-2 subfamily.

Its subcellular location is the cytoplasm. In terms of biological role, catalyzes the GTP-dependent ribosomal translocation step during translation elongation. During this step, the ribosome changes from the pre-translocational (PRE) to the post-translocational (POST) state as the newly formed A-site-bound peptidyl-tRNA and P-site-bound deacylated tRNA move to the P and E sites, respectively. Catalyzes the coordinated movement of the two tRNA molecules, the mRNA and conformational changes in the ribosome. The protein is Elongation factor 2 of Methanosarcina barkeri (strain Fusaro / DSM 804).